A 299-amino-acid chain; its full sequence is Ribonuclease Z (299 aa).

The Zn(2+) site is built by histidine 60, histidine 62, aspartate 64, histidine 65, histidine 137, aspartate 207, and histidine 265. The Proton acceptor role is filled by aspartate 64.

Belongs to the RNase Z family. In terms of assembly, homodimer. It depends on Zn(2+) as a cofactor.

The catalysed reaction is Endonucleolytic cleavage of RNA, removing extra 3' nucleotides from tRNA precursor, generating 3' termini of tRNAs. A 3'-hydroxy group is left at the tRNA terminus and a 5'-phosphoryl group is left at the trailer molecule.. Zinc phosphodiesterase, which displays some tRNA 3'-processing endonuclease activity. Probably involved in tRNA maturation, by removing a 3'-trailer from precursor tRNA. This Nitrosopumilus maritimus (strain SCM1) protein is Ribonuclease Z.